The chain runs to 236 residues: Small ribosomal subunit protein uS3 (236 aa).

The KH type-2 domain maps to 39–107 (IREFLTEELK…DTSLNIVEVR (69 aa)). A disordered region spans residues 214-236 (ASERRAVEGDNQGSSSNRRRENA).

Belongs to the universal ribosomal protein uS3 family. In terms of assembly, part of the 30S ribosomal subunit. Forms a tight complex with proteins S10 and S14.

Its function is as follows. Binds the lower part of the 30S subunit head. Binds mRNA in the 70S ribosome, positioning it for translation. This chain is Small ribosomal subunit protein uS3, found in Brucella anthropi (strain ATCC 49188 / DSM 6882 / CCUG 24695 / JCM 21032 / LMG 3331 / NBRC 15819 / NCTC 12168 / Alc 37) (Ochrobactrum anthropi).